The following is a 369-amino-acid chain: 3',5'-cyclic-nucleotide phosphodiesterase 1 (369 aa).

Belongs to the cyclic nucleotide phosphodiesterase class-II family.

The enzyme catalyses a nucleoside 3',5'-cyclic phosphate + H2O = a nucleoside 5'-phosphate + H(+). In terms of biological role, controls the level of cAMP in yeast cells, together with the high-affinity cAMP phosphodiesterase (PDE2). The polypeptide is 3',5'-cyclic-nucleotide phosphodiesterase 1 (PDE1) (Saccharomyces cerevisiae (strain ATCC 204508 / S288c) (Baker's yeast)).